A 984-amino-acid polypeptide reads, in one-letter code: G patch domain-containing protein TGH homolog (984 aa).

Residues 130-144 (EHARKQASKEQKERP) show a composition bias toward basic and acidic residues. The disordered stretch occupies residues 130-153 (EHARKQASKEQKERPSAIPGPIPD). The G-patch domain maps to 160-202 (TTSIGVKLLMKMGWRQGRSIRDAHADSLYESRREARKAFLALS). The stretch at 408–450 (LIEGCAAMVARCGKHIEDFYKEKSKTNTQFNFLNEGDGCSYYA) is one SURP motif repeat. 4 disordered regions span residues 464-503 (QKPD…SSFP), 679-717 (TRTN…ESSS), 775-806 (LGLD…GISR), and 820-984 (ESAL…HHKR). Residues 473–495 (SSDKLTAENRGKILGERPLDRST) are compositionally biased toward basic and acidic residues. The span at 679–695 (TRTNEVESSSIAPQHTS) shows a compositional bias: polar residues. Low complexity predominate over residues 697–709 (AGATETEAKGAAT). Positions 814–859 (QEIKENESALDKEEIANASADVPSDNVEELGLKYEKQEHRAEKSRS) form a coiled coil. A compositionally biased stretch (basic and acidic residues) spans 843-858 (LGLKYEKQEHRAEKSR). Composition is skewed to basic residues over residues 882–892 (SRERRSRHKIR), 905–922 (HRSK…RRSR), and 934–946 (TKRK…HHRT). The segment covering 947 to 974 (RNPDTDSSDHEYEERHKSSSRRSSDKDR) has biased composition (basic and acidic residues). The span at 975-984 (SRRRSRHHKR) shows a compositional bias: basic residues.

The protein resides in the nucleus. In terms of biological role, functions as a component of microRNA (miRNA) and small interfering RNA (siRNA) biogenesis. May assist Dicer-like (DCL) proteins to efficiently process and/or recruit the precursors of miRNAs and siRNAs. This chain is G patch domain-containing protein TGH homolog, found in Oryza sativa subsp. japonica (Rice).